A 184-amino-acid polypeptide reads, in one-letter code: PLASMODESMATA CALLOSE-BINDING PROTEIN 3 (184 aa).

The N-terminal stretch at 1-19 (MAVFVLVMILLAMAGHSSG) is a signal peptide. A disulfide bridge links Cys22 with Cys84. The segment at 109–146 (SGSGTTTPVTTTPSTRVPTTTNTRPYTITPSTGGGLGI) is disordered. Over residues 113–139 (TTTPVTTTPSTRVPTTTNTRPYTITPS) the composition is skewed to low complexity. Ser158 carries GPI-anchor amidated serine lipidation. Residues 159-184 (FGFKLQSPRFGFIVLFTLFLPFYLFS) constitute a propeptide, removed in mature form.

In terms of processing, contains two additional disulfide bonds. As to expression, expressed in the shoot apical region and in young leaves but also detected in the laminar and vasculature of mature leaves.

It localises to the cell membrane. Its subcellular location is the cell junction. It is found in the plasmodesma. The protein is PLASMODESMATA CALLOSE-BINDING PROTEIN 3 (PDCB3) of Arabidopsis thaliana (Mouse-ear cress).